The sequence spans 541 residues: Chaperonin GroEL (541 aa).

Residues 29-32, 86-90, Gly-413, 476-478, and Asp-492 each bind ATP; these read TLGP, DGTTT, and NAA.

Belongs to the chaperonin (HSP60) family. As to quaternary structure, forms a cylinder of 14 subunits composed of two heptameric rings stacked back-to-back. Interacts with the co-chaperonin GroES.

Its subcellular location is the cytoplasm. It carries out the reaction ATP + H2O + a folded polypeptide = ADP + phosphate + an unfolded polypeptide.. Its function is as follows. Together with its co-chaperonin GroES, plays an essential role in assisting protein folding. The GroEL-GroES system forms a nano-cage that allows encapsulation of the non-native substrate proteins and provides a physical environment optimized to promote and accelerate protein folding. The protein is Chaperonin GroEL of Enterococcus faecalis (strain ATCC 700802 / V583).